A 62-amino-acid polypeptide reads, in one-letter code: Defensin-like protein A (62 aa).

The signal sequence occupies residues M1 to A26. Cysteines 42 and 52 form a disulfide.

Belongs to the DEFL family.

It localises to the secreted. Truncated and inactivated form of SCRA, a protein involved in male-mediated self-incompatibility when active. Most A.thaliana cultivars contain such an inactive form and thus, are self-fertiles. In Arabidopsis thaliana (Mouse-ear cress), this protein is Defensin-like protein A (SCRA).